Reading from the N-terminus, the 213-residue chain is Thymidylate kinase (213 aa).

11 to 18 (GGEGAGKT) contacts ATP.

It belongs to the thymidylate kinase family.

The catalysed reaction is dTMP + ATP = dTDP + ADP. Phosphorylation of dTMP to form dTDP in both de novo and salvage pathways of dTTP synthesis. The polypeptide is Thymidylate kinase (Shouchella clausii (strain KSM-K16) (Alkalihalobacillus clausii)).